We begin with the raw amino-acid sequence, 375 residues long: Tyrosine--tRNA ligase (375 aa).

L-tyrosine-binding residues include tyrosine 37, tyrosine 168, glutamine 172, aspartate 175, and glutamine 190. Positions lysine 251–serine 255 match the 'KMSKS' region motif. Residue lysine 254 coordinates ATP.

This sequence belongs to the class-I aminoacyl-tRNA synthetase family. TyrS type 4 subfamily. Homodimer.

Its subcellular location is the cytoplasm. It carries out the reaction tRNA(Tyr) + L-tyrosine + ATP = L-tyrosyl-tRNA(Tyr) + AMP + diphosphate + H(+). Its function is as follows. Catalyzes the attachment of tyrosine to tRNA(Tyr) in a two-step reaction: tyrosine is first activated by ATP to form Tyr-AMP and then transferred to the acceptor end of tRNA(Tyr). The protein is Tyrosine--tRNA ligase of Pyrococcus abyssi (strain GE5 / Orsay).